We begin with the raw amino-acid sequence, 375 residues long: Alcohol dehydrogenase 1A (375 aa).

At serine 2 the chain carries N-acetylserine. A Phosphoserine modification is found at serine 23. Residue cysteine 47 participates in Zn(2+) binding. 48-52 contacts NAD(+); the sequence is GTDDH. Residues histidine 68, cysteine 98, cysteine 101, cysteine 104, cysteine 112, and cysteine 175 each contribute to the Zn(2+) site. NAD(+)-binding positions include 200–205, aspartate 224, lysine 229, isoleucine 270, 293–295, 318–320, and arginine 370; these read GLGGVG, VGV, and AVL.

Belongs to the zinc-containing alcohol dehydrogenase family. Dimer of identical or heterodimer of closely related subunits alpha, beta, or gamma that are encoded by genes ADH1A, ADH1B, and ADH1C, respectively. Zn(2+) serves as cofactor.

The protein localises to the cytoplasm. It carries out the reaction a primary alcohol + NAD(+) = an aldehyde + NADH + H(+). The catalysed reaction is a secondary alcohol + NAD(+) = a ketone + NADH + H(+). It catalyses the reaction butan-1-ol + NAD(+) = butanal + NADH + H(+). The enzyme catalyses 1-propanol + NAD(+) = propanal + NADH + H(+). Functionally, alcohol dehydrogenase. Oxidizes primary as well as secondary alcohols. Ethanol is a very poor substrate. This is Alcohol dehydrogenase 1A (ADH1A) from Pongo abelii (Sumatran orangutan).